Reading from the N-terminus, the 426-residue chain is Histidine--tRNA ligase (426 aa).

The protein belongs to the class-II aminoacyl-tRNA synthetase family. Homodimer.

Its subcellular location is the cytoplasm. It carries out the reaction tRNA(His) + L-histidine + ATP = L-histidyl-tRNA(His) + AMP + diphosphate + H(+). The chain is Histidine--tRNA ligase from Streptococcus thermophilus (strain ATCC BAA-491 / LMD-9).